Reading from the N-terminus, the 749-residue chain is Patatin-like phospholipase domain-containing protein An01g04180 (749 aa).

A disordered region spans residues 1-21; that stretch reads MNGAEKSAAGDTYDPSTIPDY. A helical membrane pass occupies residues 87 to 107; that stretch reads WPFLFTVFGWITALAFAYTLT. In terms of domain architecture, PNPLA spans 277–468; that stretch reads LCLSGGATFA…RTDIPIKALN (192 aa). The short motif at 308–312 is the GXSXG element; the sequence is GTSGG. Catalysis depends on S310, which acts as the Nucleophile. Catalysis depends on D455, which acts as the Proton acceptor. The disordered stretch occupies residues 619–726; the sequence is AGGRPISPAP…STGSSIFEEV (108 aa). Positions 649 to 664 are enriched in basic and acidic residues; sequence PLNERLDHNLPERRGD. Low complexity predominate over residues 685–707; the sequence is SLSENSSNESAARPSSSSSSSRL.

It belongs to the PLPL family.

It is found in the membrane. In terms of biological role, probable lipid hydrolase. This Aspergillus niger (strain ATCC MYA-4892 / CBS 513.88 / FGSC A1513) protein is Patatin-like phospholipase domain-containing protein An01g04180.